Reading from the N-terminus, the 42-residue chain is Small protein MntS (42 aa).

The protein localises to the cytoplasm. Required for repression of mntH by MntR. May function as a chaperone that makes manganese more available by delivering it to the necessary cellular locations when manganese is limiting. The protein is Small protein MntS (mntS) of Escherichia coli (strain K12).